The sequence spans 138 residues: MRLTQGAFSFLPDLTDQQINKQLAYIVSKGWSANVEYTDDPHPRNAYWELWGLPLFDVKDPAAVMYEINSCRKAKPSYYVKVNAFDNTRGVESCSMSFIVNRPANEPGFLLQRQDFEGRTMKYTLHSYATEKPEGARY.

This sequence belongs to the RuBisCO small chain family. In terms of assembly, heterohexadecamer of 8 large and 8 small subunits.

The protein resides in the plastid. It is found in the chloroplast. RuBisCO catalyzes two reactions: the carboxylation of D-ribulose 1,5-bisphosphate, the primary event in carbon dioxide fixation, as well as the oxidative fragmentation of the pentose substrate in the photorespiration process. Both reactions occur simultaneously and in competition at the same active site. Although the small subunit is not catalytic it is essential for maximal activity. The protein is Ribulose bisphosphate carboxylase small subunit of Porphyra purpurea (Red seaweed).